The chain runs to 294 residues: ATP synthase gamma chain (294 aa).

Belongs to the ATPase gamma chain family. As to quaternary structure, F-type ATPases have 2 components, CF(1) - the catalytic core - and CF(0) - the membrane proton channel. CF(1) has five subunits: alpha(3), beta(3), gamma(1), delta(1), epsilon(1). CF(0) has three main subunits: a, b and c.

It localises to the cell inner membrane. Its function is as follows. Produces ATP from ADP in the presence of a proton gradient across the membrane. The gamma chain is believed to be important in regulating ATPase activity and the flow of protons through the CF(0) complex. In Caulobacter sp. (strain K31), this protein is ATP synthase gamma chain.